The following is a 100-amino-acid chain: Urease subunit gamma (100 aa).

This sequence belongs to the urease gamma subunit family. In terms of assembly, heterotrimer of UreA (gamma), UreB (beta) and UreC (alpha) subunits. Three heterotrimers associate to form the active enzyme.

The protein localises to the cytoplasm. It catalyses the reaction urea + 2 H2O + H(+) = hydrogencarbonate + 2 NH4(+). Its pathway is nitrogen metabolism; urea degradation; CO(2) and NH(3) from urea (urease route): step 1/1. In Ruegeria pomeroyi (strain ATCC 700808 / DSM 15171 / DSS-3) (Silicibacter pomeroyi), this protein is Urease subunit gamma.